We begin with the raw amino-acid sequence, 357 residues long: Sulfate/thiosulfate import ATP-binding protein CysA (357 aa).

Residues 3–237 (IQIQGVSKQY…PASPFVYDFL (235 aa)) form the ABC transporter domain. Residue 35 to 42 (GPSGSGKT) coordinates ATP.

The protein belongs to the ABC transporter superfamily. Sulfate/tungstate importer (TC 3.A.1.6) family. The complex is composed of two ATP-binding proteins (CysA), two transmembrane proteins (CysT and CysW) and a solute-binding protein (CysP).

It localises to the cell membrane. The catalysed reaction is sulfate(out) + ATP + H2O = sulfate(in) + ADP + phosphate + H(+). It catalyses the reaction thiosulfate(out) + ATP + H2O = thiosulfate(in) + ADP + phosphate + H(+). In terms of biological role, part of the ABC transporter complex CysAWTP involved in sulfate/thiosulfate import. Responsible for energy coupling to the transport system. The polypeptide is Sulfate/thiosulfate import ATP-binding protein CysA (Bacillus cereus (strain ATCC 10987 / NRS 248)).